Consider the following 299-residue polypeptide: GTPase Era (299 aa).

In terms of domain architecture, Era-type G spans 4 to 171 (KSGFVAILGR…VDILSENLDE (168 aa)). The segment at 12-19 (GRPNVGKS) is G1. 12 to 19 (GRPNVGKS) provides a ligand contact to GTP. Residues 38-42 (QTTRN) are G2. Residues 59-62 (DTPG) are G3. Residues 59 to 63 (DTPGI) and 121 to 124 (NKID) each bind GTP. The segment at 121-124 (NKID) is G4. A G5 region spans residues 150–152 (ISA). The KH type-2 domain occupies 202-280 (TREEIPHSVA…FLETWVKVKK (79 aa)).

Belongs to the TRAFAC class TrmE-Era-EngA-EngB-Septin-like GTPase superfamily. Era GTPase family. In terms of assembly, monomer.

The protein localises to the cytoplasm. It is found in the cell membrane. In terms of biological role, an essential GTPase that binds both GDP and GTP, with rapid nucleotide exchange. Plays a role in 16S rRNA processing and 30S ribosomal subunit biogenesis and possibly also in cell cycle regulation and energy metabolism. The polypeptide is GTPase Era (Streptococcus pneumoniae (strain Hungary19A-6)).